A 549-amino-acid polypeptide reads, in one-letter code: Glucose-6-phosphate isomerase (549 aa).

E355 serves as the catalytic Proton donor. Active-site residues include H387 and K515.

It belongs to the GPI family.

It is found in the cytoplasm. It catalyses the reaction alpha-D-glucose 6-phosphate = beta-D-fructose 6-phosphate. The protein operates within carbohydrate biosynthesis; gluconeogenesis. It functions in the pathway carbohydrate degradation; glycolysis; D-glyceraldehyde 3-phosphate and glycerone phosphate from D-glucose: step 2/4. Catalyzes the reversible isomerization of glucose-6-phosphate to fructose-6-phosphate. The sequence is that of Glucose-6-phosphate isomerase from Histophilus somni (strain 2336) (Haemophilus somnus).